Here is a 1194-residue protein sequence, read N- to C-terminus: DNA polymerase catalytic subunit (1194 aa).

The protein belongs to the DNA polymerase type-B family. In terms of assembly, forms a complex with the ssDNA-binding protein, the DNA polymerase processivity factor, and the alkaline exonuclease. Interacts with the helicase-primase complex composed of the primase, the helicase and the primase-associated factor; this interaction may coordinate leading and lagging strand DNA synthesis at the replication fork.

It is found in the host nucleus. The enzyme catalyses DNA(n) + a 2'-deoxyribonucleoside 5'-triphosphate = DNA(n+1) + diphosphate. It catalyses the reaction Endonucleolytic cleavage to 5'-phosphomonoester.. Functionally, replicates viral genomic DNA. The replication complex is composed of six viral proteins: the DNA polymerase, processivity factor, primase, primase-associated factor, helicase, and ssDNA-binding protein. Additionally, the polymerase contains an intrinsic ribonuclease H (RNase H) activity that specifically degrades RNA/DNA heteroduplexes or duplex DNA substrates in the 5' to 3' direction. Therefore, it can catalyze the excision of the RNA primers that initiate the synthesis of Okazaki fragments at a replication fork during viral DNA replication. The polypeptide is DNA polymerase catalytic subunit (Varicella-zoster virus (strain Dumas) (HHV-3)).